Consider the following 113-residue polypeptide: TYRO protein tyrosine kinase-binding protein (113 aa).

The signal sequence occupies residues 1–27 (MGGLEPCSRLLLLPLLLAVGGLRPVQA). Over 28–40 (QAQSDCSCSTVSP) the chain is Extracellular. Residues 41-61 (GVLAGIVLGDLVLTVLIALAV) form a helical membrane-spanning segment. Position 50 (Asp50) interacts with Ca(2+). Residues 62–113 (YFLGRLVPRGRGAAEAATRKQRITETESPYQELQGQRSDVYSDLNTQRPYYK) are Cytoplasmic-facing. Residues 75 to 113 (AEAATRKQRITETESPYQELQGQRSDVYSDLNTQRPYYK) are disordered. The ITAM domain maps to 80–108 (RKQRITETESPYQELQGQRSDVYSDLNTQ). Residues 87–113 (TESPYQELQGQRSDVYSDLNTQRPYYK) show a composition bias toward polar residues. Phosphotyrosine occurs at positions 91 and 102.

It belongs to the TYROBP family. As to quaternary structure, homodimer; disulfide-linked. Homotrimer; disulfide-linked. Homotetramer; disulfide-linked. Homotrimers and homotetramers form when low levels of partner receptors are available and is competitive with assembly with interacting receptors. They may represent alternative oligomerization states or may be intermediates in the receptor assembly process. Binding of a metal cation aids in homooligomerization through coordination of the metal ion by the subunits of the oligomer. Interacts with TREM1. Interacts with TREM2. Interacts with CLECSF5. Interacts with CD300LB and CD300C2. Interacts with CD300E. Interacts (via ITAM domain) with SYK (via SH2 domains); activates SYK mediating neutrophils and macrophages integrin-mediated activation. Interacts with KLRC2. Interacts with CD300H. Interacts with KLRD1. Following ligand binding by associated receptors, tyrosine phosphorylated in the ITAM domain which leads to activation of additional tyrosine kinases and subsequent cell activation.

The protein localises to the cell membrane. Its function is as follows. Adapter protein which non-covalently associates with activating receptors found on the surface of a variety of immune cells to mediate signaling and cell activation following ligand binding by the receptors. TYROBP is tyrosine-phosphorylated in the ITAM domain following ligand binding by the associated receptors which leads to activation of additional tyrosine kinases and subsequent cell activation. Also has an inhibitory role in some cells. Non-covalently associates with activating receptors of the CD300 family to mediate cell activation. Also mediates cell activation through association with activating receptors of the CD200R family. Required for neutrophil activation mediated by integrin. Required for the activation of myeloid cells mediated by the CLEC5A/MDL1 receptor. Associates with natural killer (NK) cell receptors such as the KLRD1/KLRC2 heterodimer to mediate NK cell activation. Associates with TREM1 to mediate activation of neutrophils and monocytes. Associates with TREM2 on monocyte-derived dendritic cells to mediate up-regulation of chemokine receptor CCR7 and dendritic cell maturation and survival. Association with TREM2 mediates cytokine-induced formation of multinucleated giant cells which are formed by the fusion of macrophages. Stabilizes the TREM2 C-terminal fragment (TREM2-CTF) produced by TREM2 ectodomain shedding which suppresses the release of pro-inflammatory cytokines. In microglia, required with TREM2 for phagocytosis of apoptotic neurons. Required with ITGAM/CD11B in microglia to control production of microglial superoxide ions which promote the neuronal apoptosis that occurs during brain development. Promotes pro-inflammatory responses in microglia following nerve injury which accelerates degeneration of injured neurons. Positively regulates the expression of the IRAK3/IRAK-M kinase and IL10 production by liver dendritic cells and inhibits their T cell allosimulatory ability. Negatively regulates B cell proliferation. Required for CSF1-mediated osteoclast cytoskeletal organization. Positively regulates multinucleation during osteoclast development. This Macaca mulatta (Rhesus macaque) protein is TYRO protein tyrosine kinase-binding protein.